The chain runs to 112 residues: UPF0212 protein Mboo_1659 (112 aa).

The protein belongs to the UPF0212 family.

The protein is UPF0212 protein Mboo_1659 of Methanoregula boonei (strain DSM 21154 / JCM 14090 / 6A8).